Here is a 490-residue protein sequence, read N- to C-terminus: MNNMAVRVRFCPSPTGTPHVGLIRTALFNWAYARHTGGTFVFRIEDTDSARDSEESYQAILDALNWLGLDYDEGPEIGGPYAPYRQSQRRDLYRDVIDRLIAAGEAYEAYSTAEEVEARHLAAGRNPKLGYDNFDRDLTDEQRAAHRAEGRNPVIRLRMPERDITWRDLVRGETTFGAGTMPDFALTRGNGEPLYTLVNPVDDALMKITHVLRGEDLLPSTPRQIALYEALIRIGVADGVPEFAHLPSVLGDGNKKLSKRDPQSNLFLHRDRGFIPEGLLNYLALLGWGIADDRDVFGLDEMVAAFDVVDVNSNPARFDQKKADALNAEHIRLLSEDEFTARLKAYFAAHGHDTGLDDAQFAEAARLVQTRIVVLGDAWGLLKFLDEGAFVLDERAAAKELKADAVPVLDAALAGLEGVGQWTTGAIEEALKKALLEDLELKPRKAFGPIRVAATGASVSPPLFESLELLGRDRSLARLRAGRDHAAAAA.

Positions 12–22 (PSPTGTPHVGL) match the 'HIGH' region motif. A 'KMSKS' region motif is present at residues 256 to 260 (KLSKR). K259 contributes to the ATP binding site.

Belongs to the class-I aminoacyl-tRNA synthetase family. Glutamate--tRNA ligase type 1 subfamily. Monomer.

It localises to the cytoplasm. It carries out the reaction tRNA(Glu) + L-glutamate + ATP = L-glutamyl-tRNA(Glu) + AMP + diphosphate. In terms of biological role, catalyzes the attachment of glutamate to tRNA(Glu) in a two-step reaction: glutamate is first activated by ATP to form Glu-AMP and then transferred to the acceptor end of tRNA(Glu). The polypeptide is Glutamate--tRNA ligase (Mycobacterium sp. (strain JLS)).